We begin with the raw amino-acid sequence, 227 residues long: Endonuclease V (227 aa).

Mg(2+) is bound by residues D46 and D114.

The protein belongs to the endonuclease V family. It depends on Mg(2+) as a cofactor.

It localises to the cytoplasm. It carries out the reaction Endonucleolytic cleavage at apurinic or apyrimidinic sites to products with a 5'-phosphate.. DNA repair enzyme involved in the repair of deaminated bases. Selectively cleaves double-stranded DNA at the second phosphodiester bond 3' to a deoxyinosine leaving behind the intact lesion on the nicked DNA. The chain is Endonuclease V from Alkalilimnicola ehrlichii (strain ATCC BAA-1101 / DSM 17681 / MLHE-1).